Here is a 278-residue protein sequence, read N- to C-terminus: Cation-dependent mannose-6-phosphate receptor (278 aa).

The first 21 residues, 1–21 (MFPFSGCWRTELLLLLLLAVA), serve as a signal peptide directing secretion. Residues 22–186 (VRESWQIEEK…SLACSPEVSH (165 aa)) are Lumenal-facing. Residues 31 to 182 (KSCDLVGEKD…EMDSSLACSP (152 aa)) form the MRH domain. Cys33 and Cys79 are disulfide-bonded. N-linked (GlcNAc...) asparagine glycosylation is found at Asn58, Asn84, Asn95, Asn108, and Asn114. Cystine bridges form between Cys133–Cys168 and Cys146–Cys180. A helical membrane pass occupies residues 187-211 (LSVGSILLVIFASLVAVYIIGGFLY). Residues 212-278 (QRLVVGAKGM…EERDDHLLPM (67 aa)) lie on the Cytoplasmic side of the membrane. Residues 257–278 (RGVGDDQLGEESEERDDHLLPM) are disordered. The residue at position 268 (Ser268) is a Phosphoserine.

Homodimer. Binds GGA1, GGA2 and GGA3.

It is found in the lysosome membrane. Transport of phosphorylated lysosomal enzymes from the Golgi complex and the cell surface to lysosomes. Lysosomal enzymes bearing phosphomannosyl residues bind specifically to mannose-6-phosphate receptors in the Golgi apparatus and the resulting receptor-ligand complex is transported to an acidic prelyosomal compartment where the low pH mediates the dissociation of the complex. The polypeptide is Cation-dependent mannose-6-phosphate receptor (M6pr) (Mus musculus (Mouse)).